Consider the following 71-residue polypeptide: Protein bdm (71 aa).

The polypeptide is Protein bdm (bdm) (Escherichia coli (strain K12)).